Consider the following 98-residue polypeptide: Ribonuclease kappa (98 aa).

2 helical membrane-spanning segments follow: residues A13 to F33 and V65 to C85.

This sequence belongs to the RNase K family. As to quaternary structure, interacts with the proton translocation complex V0 of the V-ATPase. Interacts with ATP6AP1.

The protein localises to the endomembrane system. The protein resides in the cytoplasmic vesicle. Its subcellular location is the clathrin-coated vesicle membrane. Functionally, endoribonuclease which preferentially cleaves ApU and ApG phosphodiester bonds. Hydrolyzes UpU bonds at a lower rate. Regulates the activity of vacuolar (H+)-ATPase (V-ATPase) which is responsible for acidifying and maintaining the pH of intracellular compartments. Required at an early stage of receptor-mediated endocytosis. The sequence is that of Ribonuclease kappa (Rnasek) from Mus musculus (Mouse).